Reading from the N-terminus, the 237-residue chain is Sugar fermentation stimulation protein homolog (237 aa).

The protein belongs to the SfsA family.

The polypeptide is Sugar fermentation stimulation protein homolog (Synechocystis sp. (strain ATCC 27184 / PCC 6803 / Kazusa)).